The sequence spans 245 residues: Short-chain dehydrogenase/reductase pyiH (245 aa).

NADP(+) contacts are provided by I18, R42, D68, and N95. Residue S150 is the Proton donor of the active site.

This sequence belongs to the short-chain dehydrogenases/reductases (SDR) family.

The protein operates within mycotoxin biosynthesis. Its function is as follows. Short-chain dehydrogenase/reductase; part of the gene cluster that mediates the biosynthesis of the mycotoxin pyrichalasin H, a tyrosine-derived cytochalasan that inhibits the growth of rice seedlings, but also inhibits lymphocyte capping and actin polymerization and alters cell morphology. Pyrichalasin H is indicated as the responsible agent for the genus-specific pathogenicity of M.grisea toward crabgrass. The first step in the pathway is catalyzed by the O-methyltransferase pyiA which methylates free tyrosine to generate the precursor O-methyltyrosine. The hybrid PKS-NRPS pyiS, assisted by the enoyl reductase pyiC, are responsible for fusion of the O-methyltyrosine precursor and the polyketide backbone. The polyketide synthase module (PKS) of pyiS is responsible for the synthesis of the polyketide backbone and the downstream nonribosomal peptide synthetase (NRPS) amidates the carboxyl end of the polyketide with the O-methyltyrosine precursor. As the NRPS A-domain demonstrates substrate tolerance, pyiS can also use phenylalanine, tyrosine and even para-chlorophenylalanine as amino acid precursor, which leads to the production of novel cytochalasans, including halogenated cytochalasans. Because pyiS lacks a designated enoylreductase (ER) domain, the required activity is provided the enoyl reductase pyiC. Reduction by the hydrolyase pyiE leads to 1,5-dihydropyrrolone, which is substrate for dehydration and intra-molecular Diels-Alder cyclization by the Diels-Alderase pyiF to yield the required isoindolone-fused macrocycle. The tailoring cytochrome P450 monooxygenases piyD and piyG catalyze the hydroxylation at C-18 and C-7, respectivily, whereas the short-chain dehydrogenase/reductase pyiH reduces the carbonyl at C-21 in preparation for the transfer of an acetyl group by the acetyltransferase pyiB. These 3 reactions whose order is not clear yet, lead to the production of O-methylpyrichalasin J, a deacetylated pyrichalasin H. Finally, pyiB to converts O-methylpyrichalasin J into the final product pyrichalasin H via acetylation of C-21. The chain is Short-chain dehydrogenase/reductase pyiH from Pyricularia grisea (Crabgrass-specific blast fungus).